The sequence spans 261 residues: Cell division protein B (261 aa).

The tract at residues Ser213–Gly261 is winged-helix-like fold.

Interacts with CdvA. Interacts with CdvC.

The protein localises to the cytoplasm. It localises to the nucleoid. Part of a cell division machinery. The CdvA, CdvB and CdvC proteins polymerize between segregating nucleoids and persist throughout cell division, forming a successively smaller structure during constriction. The protein is Cell division protein B of Sulfolobus acidocaldarius (strain ATCC 33909 / DSM 639 / JCM 8929 / NBRC 15157 / NCIMB 11770).